Reading from the N-terminus, the 242-residue chain is Pyridoxine 5'-phosphate synthase (242 aa).

A 3-amino-2-oxopropyl phosphate-binding site is contributed by asparagine 6. 8 to 9 (DH) serves as a coordination point for 1-deoxy-D-xylulose 5-phosphate. Arginine 17 lines the 3-amino-2-oxopropyl phosphate pocket. The Proton acceptor role is filled by histidine 42. Positions 44 and 49 each coordinate 1-deoxy-D-xylulose 5-phosphate. Glutamate 69 acts as the Proton acceptor in catalysis. Threonine 99 is a 1-deoxy-D-xylulose 5-phosphate binding site. Histidine 193 serves as the catalytic Proton donor. 3-amino-2-oxopropyl phosphate-binding positions include glycine 194 and 217-218 (GH).

It belongs to the PNP synthase family. As to quaternary structure, homooctamer; tetramer of dimers.

It is found in the cytoplasm. The enzyme catalyses 3-amino-2-oxopropyl phosphate + 1-deoxy-D-xylulose 5-phosphate = pyridoxine 5'-phosphate + phosphate + 2 H2O + H(+). It participates in cofactor biosynthesis; pyridoxine 5'-phosphate biosynthesis; pyridoxine 5'-phosphate from D-erythrose 4-phosphate: step 5/5. Functionally, catalyzes the complicated ring closure reaction between the two acyclic compounds 1-deoxy-D-xylulose-5-phosphate (DXP) and 3-amino-2-oxopropyl phosphate (1-amino-acetone-3-phosphate or AAP) to form pyridoxine 5'-phosphate (PNP) and inorganic phosphate. This is Pyridoxine 5'-phosphate synthase from Aquifex aeolicus (strain VF5).